The following is an 870-amino-acid chain: DNA polymerase kappa (870 aa).

The UmuC domain maps to 103 to 358 (IVHIDMDAFY…LPIRKVSGIG (256 aa)). Mg(2+) is bound by residues aspartate 107, aspartate 198, and glutamate 199. 2 UBZ4-type zinc fingers span residues 621 to 651 (ILTC…DGPS) and 776 to 806 (ALVC…NKSF). Zn(2+) is bound by residues cysteine 624, cysteine 627, histidine 642, cysteine 646, cysteine 779, cysteine 782, histidine 797, and cysteine 801. The interval 816-858 (NPVNQPKESSRSTGSSSGVQKAVTRTKRPGLMTKYSTSKKIKP) is disordered.

This sequence belongs to the DNA polymerase type-Y family. Interacts with REV1. Interacts with PCNA. Requires Mg(2+) as cofactor. Mn(2+) is required as a cofactor. As to expression, detected at low levels in testis, spleen, prostate and ovary. Detected at very low levels in kidney, colon, brain, heart, liver, lung, placenta, pancreas and peripheral blood leukocytes.

The protein resides in the nucleus. It carries out the reaction DNA(n) + a 2'-deoxyribonucleoside 5'-triphosphate = DNA(n+1) + diphosphate. In terms of biological role, DNA polymerase specifically involved in DNA repair. Plays an important role in translesion synthesis, where the normal high-fidelity DNA polymerases cannot proceed and DNA synthesis stalls. Depending on the context, it inserts the correct base, but causes frequent base transitions, transversions and frameshifts. Lacks 3'-5' proofreading exonuclease activity. Forms a Schiff base with 5'-deoxyribose phosphate at abasic sites, but does not have lyase activity. The sequence is that of DNA polymerase kappa (POLK) from Homo sapiens (Human).